Reading from the N-terminus, the 418-residue chain is Tryptophan synthase beta chain (418 aa).

Over residues 1–12 the composition is skewed to polar residues; sequence MTSTLPTANTPD. The interval 1–21 is disordered; sequence MTSTLPTANTPDPASLMPSVR. K111 bears the N6-(pyridoxal phosphate)lysine mark.

This sequence belongs to the TrpB family. In terms of assembly, tetramer of two alpha and two beta chains. Pyridoxal 5'-phosphate is required as a cofactor.

It catalyses the reaction (1S,2R)-1-C-(indol-3-yl)glycerol 3-phosphate + L-serine = D-glyceraldehyde 3-phosphate + L-tryptophan + H2O. It functions in the pathway amino-acid biosynthesis; L-tryptophan biosynthesis; L-tryptophan from chorismate: step 5/5. The beta subunit is responsible for the synthesis of L-tryptophan from indole and L-serine. The sequence is that of Tryptophan synthase beta chain from Synechococcus sp. (strain CC9311).